We begin with the raw amino-acid sequence, 32 residues long: Ranatuerin-2BYa (32 aa).

A disulfide bridge connects residues C27 and C32.

Expressed by the skin glands.

The protein resides in the secreted. Antibacterial activity against Gram-positive bacterium S.aureus and Gram-negative bacterium E.coli. Weak hemolytic activity. This Rana boylii (Foothill yellow-legged frog) protein is Ranatuerin-2BYa.